A 577-amino-acid chain; its full sequence is Eukaryotic translation initiation factor 3 subunit D (577 aa).

The segment at D103–R177 is disordered. Residues G166–R177 show a composition bias toward basic and acidic residues. The tract at residues T305–P319 is RNA gate. Residues G558 to D577 are disordered. Positions F560–D577 are enriched in acidic residues.

The protein belongs to the eIF-3 subunit D family. In terms of assembly, component of the eukaryotic translation initiation factor 3 (eIF-3) complex.

The protein resides in the cytoplasm. In terms of biological role, mRNA cap-binding component of the eukaryotic translation initiation factor 3 (eIF-3) complex, which is involved in protein synthesis of a specialized repertoire of mRNAs and, together with other initiation factors, stimulates binding of mRNA and methionyl-tRNAi to the 40S ribosome. The eIF-3 complex specifically targets and initiates translation of a subset of mRNAs involved in cell proliferation. In the eIF-3 complex, eif3d specifically recognizes and binds the 7-methylguanosine cap of a subset of mRNAs. The chain is Eukaryotic translation initiation factor 3 subunit D from Sclerotinia sclerotiorum (strain ATCC 18683 / 1980 / Ss-1) (White mold).